We begin with the raw amino-acid sequence, 159 residues long: Major latex protein 146 (159 aa).

It belongs to the MLP family. Laticifer.

The protein localises to the vacuole. The protein resides in the cytoplasmic vesicle. Not known; MLPs constitute up to 50% of the soluble latex protein. This is Major latex protein 146 (MLP146) from Papaver somniferum (Opium poppy).